Consider the following 385-residue polypeptide: L-arabinitol 4-dehydrogenase (385 aa).

Positions 54, 79, 80, 109, 112, 115, 123, and 164 each coordinate Zn(2+). NAD(+) is bound by residues 191-192, Asp-212, Arg-217, Ile-292, and 316-318; these read PI and QYR.

It belongs to the zinc-containing alcohol dehydrogenase family. Homotetramer. Zn(2+) serves as cofactor.

The enzyme catalyses L-arabinitol + NAD(+) = L-xylulose + NADH + H(+). It participates in carbohydrate degradation; L-arabinose degradation via L-arabinitol; D-xylulose 5-phosphate from L-arabinose (fungal route): step 2/5. In terms of biological role, catalyzes the NAD-dependent oxidation of L-arabinitol to L-xylulose in the fungal L-arabinose catabolic pathway. L-arabinose catabolism is important for using plant material as a carbon source. NADP cannot act as a cosubstrate. In Penicillium rubens (strain ATCC 28089 / DSM 1075 / NRRL 1951 / Wisconsin 54-1255) (Penicillium chrysogenum), this protein is L-arabinitol 4-dehydrogenase (lad1).